The chain runs to 302 residues: Acetaldehyde dehydrogenase 1 (302 aa).

Position 12–15 (12–15 (SGNI)) interacts with NAD(+). Catalysis depends on Cys-127, which acts as the Acyl-thioester intermediate. Residues 158 to 166 (SAGPGTRAN) and Asn-277 contribute to the NAD(+) site.

Belongs to the acetaldehyde dehydrogenase family.

It catalyses the reaction acetaldehyde + NAD(+) + CoA = acetyl-CoA + NADH + H(+). This Mycobacteroides abscessus (strain ATCC 19977 / DSM 44196 / CCUG 20993 / CIP 104536 / JCM 13569 / NCTC 13031 / TMC 1543 / L948) (Mycobacterium abscessus) protein is Acetaldehyde dehydrogenase 1.